We begin with the raw amino-acid sequence, 365 residues long: Succinyl-diaminopimelate desuccinylase (365 aa).

His65 is a Zn(2+) binding site. The active site involves Asp67. Zn(2+) is bound at residue Asp96. Glu126 serves as the catalytic Proton acceptor. Residues Glu127, Glu155, and His340 each coordinate Zn(2+).

This sequence belongs to the peptidase M20A family. DapE subfamily. Homodimer. Zn(2+) serves as cofactor. Co(2+) is required as a cofactor.

It carries out the reaction N-succinyl-(2S,6S)-2,6-diaminopimelate + H2O = (2S,6S)-2,6-diaminopimelate + succinate. The protein operates within amino-acid biosynthesis; L-lysine biosynthesis via DAP pathway; LL-2,6-diaminopimelate from (S)-tetrahydrodipicolinate (succinylase route): step 3/3. Functionally, catalyzes the hydrolysis of N-succinyl-L,L-diaminopimelic acid (SDAP), forming succinate and LL-2,6-diaminopimelate (DAP), an intermediate involved in the bacterial biosynthesis of lysine and meso-diaminopimelic acid, an essential component of bacterial cell walls. The polypeptide is Succinyl-diaminopimelate desuccinylase (Campylobacter jejuni subsp. jejuni serotype O:23/36 (strain 81-176)).